Here is a 236-residue protein sequence, read N- to C-terminus: 2-C-methyl-D-erythritol 4-phosphate cytidylyltransferase (236 aa).

The protein belongs to the IspD/TarI cytidylyltransferase family. IspD subfamily. As to quaternary structure, homodimer.

The enzyme catalyses 2-C-methyl-D-erythritol 4-phosphate + CTP + H(+) = 4-CDP-2-C-methyl-D-erythritol + diphosphate. It functions in the pathway isoprenoid biosynthesis; isopentenyl diphosphate biosynthesis via DXP pathway; isopentenyl diphosphate from 1-deoxy-D-xylulose 5-phosphate: step 2/6. Functionally, catalyzes the formation of 4-diphosphocytidyl-2-C-methyl-D-erythritol from CTP and 2-C-methyl-D-erythritol 4-phosphate (MEP). This Salmonella schwarzengrund (strain CVM19633) protein is 2-C-methyl-D-erythritol 4-phosphate cytidylyltransferase.